The primary structure comprises 273 residues: Dermonecrotic toxin LapSicTox-alphaIB1aiv (273 aa).

His5 is a catalytic residue. Mg(2+) is bound by residues Glu25 and Asp27. Catalysis depends on His41, which acts as the Nucleophile. Intrachain disulfides connect Cys45-Cys51 and Cys47-Cys190. Asp85 contacts Mg(2+). N-linked (GlcNAc...) asparagine glycosylation occurs at Asn250.

It belongs to the arthropod phospholipase D family. Class II subfamily. Requires Mg(2+) as cofactor. As to expression, expressed by the venom gland.

It localises to the secreted. It carries out the reaction an N-(acyl)-sphingosylphosphocholine = an N-(acyl)-sphingosyl-1,3-cyclic phosphate + choline. The enzyme catalyses an N-(acyl)-sphingosylphosphoethanolamine = an N-(acyl)-sphingosyl-1,3-cyclic phosphate + ethanolamine. It catalyses the reaction a 1-acyl-sn-glycero-3-phosphocholine = a 1-acyl-sn-glycero-2,3-cyclic phosphate + choline. The catalysed reaction is a 1-acyl-sn-glycero-3-phosphoethanolamine = a 1-acyl-sn-glycero-2,3-cyclic phosphate + ethanolamine. In terms of biological role, dermonecrotic toxins cleave the phosphodiester linkage between the phosphate and headgroup of certain phospholipids (sphingolipid and lysolipid substrates), forming an alcohol (often choline) and a cyclic phosphate. This toxin acts on sphingomyelin (SM). It may also act on ceramide phosphoethanolamine (CPE), lysophosphatidylcholine (LPC) and lysophosphatidylethanolamine (LPE), but not on lysophosphatidylserine (LPS), and lysophosphatidylglycerol (LPG). It acts by transphosphatidylation, releasing exclusively cyclic phosphate products as second products. Induces dermonecrosis, hemolysis, increased vascular permeability, edema, inflammatory response, and platelet aggregation. The protein is Dermonecrotic toxin LapSicTox-alphaIB1aiv of Loxosceles apachea (Apache recluse spider).